The sequence spans 547 residues: CTP synthase (547 aa).

The segment at 1–265 (MARYVFITGG…DQAVLDAFGI (265 aa)) is amidoligase domain. Residue Ser13 participates in CTP binding. Ser13 lines the UTP pocket. ATP contacts are provided by residues 14–19 (SLGKGL) and Asp71. Mg(2+) is bound by residues Asp71 and Glu139. Residues 146–148 (DIE), 186–191 (KTKPTQ), and Lys222 each bind CTP. Residues 186 to 191 (KTKPTQ) and Lys222 contribute to the UTP site. One can recognise a Glutamine amidotransferase type-1 domain in the interval 291 to 546 (RVAIVGKYTQ…VRAAVEVSRL (256 aa)). Gly353 serves as a coordination point for L-glutamine. Cys380 functions as the Nucleophile; for glutamine hydrolysis in the catalytic mechanism. Residues 381–384 (LGMQ), Glu404, and Arg474 each bind L-glutamine. Active-site residues include His519 and Glu521.

Belongs to the CTP synthase family. Homotetramer.

It catalyses the reaction UTP + L-glutamine + ATP + H2O = CTP + L-glutamate + ADP + phosphate + 2 H(+). The enzyme catalyses L-glutamine + H2O = L-glutamate + NH4(+). The catalysed reaction is UTP + NH4(+) + ATP = CTP + ADP + phosphate + 2 H(+). The protein operates within pyrimidine metabolism; CTP biosynthesis via de novo pathway; CTP from UDP: step 2/2. With respect to regulation, allosterically activated by GTP, when glutamine is the substrate; GTP has no effect on the reaction when ammonia is the substrate. The allosteric effector GTP functions by stabilizing the protein conformation that binds the tetrahedral intermediate(s) formed during glutamine hydrolysis. Inhibited by the product CTP, via allosteric rather than competitive inhibition. Its function is as follows. Catalyzes the ATP-dependent amination of UTP to CTP with either L-glutamine or ammonia as the source of nitrogen. Regulates intracellular CTP levels through interactions with the four ribonucleotide triphosphates. The protein is CTP synthase of Cereibacter sphaeroides (strain ATCC 17023 / DSM 158 / JCM 6121 / CCUG 31486 / LMG 2827 / NBRC 12203 / NCIMB 8253 / ATH 2.4.1.) (Rhodobacter sphaeroides).